The following is a 304-amino-acid chain: Acetyl-coenzyme A carboxylase carboxyl transferase subunit beta (304 aa).

A CoA carboxyltransferase N-terminal domain is found at Val-23–Val-292. Positions 27, 30, 46, and 49 each coordinate Zn(2+). The C4-type zinc-finger motif lies at Cys-27–Cys-49. A disordered region spans residues Asn-284–Ala-304. Residues Pro-295–Ala-304 show a composition bias toward pro residues.

Belongs to the AccD/PCCB family. As to quaternary structure, acetyl-CoA carboxylase is a heterohexamer composed of biotin carboxyl carrier protein (AccB), biotin carboxylase (AccC) and two subunits each of ACCase subunit alpha (AccA) and ACCase subunit beta (AccD). The cofactor is Zn(2+).

It localises to the cytoplasm. The enzyme catalyses N(6)-carboxybiotinyl-L-lysyl-[protein] + acetyl-CoA = N(6)-biotinyl-L-lysyl-[protein] + malonyl-CoA. The protein operates within lipid metabolism; malonyl-CoA biosynthesis; malonyl-CoA from acetyl-CoA: step 1/1. Its function is as follows. Component of the acetyl coenzyme A carboxylase (ACC) complex. Biotin carboxylase (BC) catalyzes the carboxylation of biotin on its carrier protein (BCCP) and then the CO(2) group is transferred by the transcarboxylase to acetyl-CoA to form malonyl-CoA. This is Acetyl-coenzyme A carboxylase carboxyl transferase subunit beta from Shigella flexneri.